A 116-amino-acid polypeptide reads, in one-letter code: NADH-ubiquinone oxidoreductase chain 3 (116 aa).

3 consecutive transmembrane segments (helical) span residues 3-23, 56-76, and 87-107; these read LISTVILIASALSLILILVSF, FFLIAILFLLFDLEIALLLPL, and LTFMWATSVLALLTLGLIYEW.

This sequence belongs to the complex I subunit 3 family.

The protein resides in the mitochondrion membrane. It carries out the reaction a ubiquinone + NADH + 5 H(+)(in) = a ubiquinol + NAD(+) + 4 H(+)(out). Functionally, core subunit of the mitochondrial membrane respiratory chain NADH dehydrogenase (Complex I) that is believed to belong to the minimal assembly required for catalysis. Complex I functions in the transfer of electrons from NADH to the respiratory chain. The immediate electron acceptor for the enzyme is believed to be ubiquinone. The polypeptide is NADH-ubiquinone oxidoreductase chain 3 (MT-ND3) (Gadus morhua (Atlantic cod)).